An 81-amino-acid chain; its full sequence is LYR motif-containing protein At3g19508 (81 aa).

It belongs to the complex I LYR family. LYRM9 subfamily.

This is LYR motif-containing protein At3g19508 from Arabidopsis thaliana (Mouse-ear cress).